The following is a 167-amino-acid chain: NADH-quinone oxidoreductase subunit B 1 (167 aa).

[4Fe-4S] cluster is bound by residues Cys-38, Cys-39, Cys-104, and Cys-133.

This sequence belongs to the complex I 20 kDa subunit family. As to quaternary structure, NDH-1 is composed of 14 different subunits. Subunits NuoB, C, D, E, F, and G constitute the peripheral sector of the complex. [4Fe-4S] cluster is required as a cofactor.

Its subcellular location is the cell membrane. The enzyme catalyses a quinone + NADH + 5 H(+)(in) = a quinol + NAD(+) + 4 H(+)(out). Functionally, NDH-1 shuttles electrons from NADH, via FMN and iron-sulfur (Fe-S) centers, to quinones in the respiratory chain. The immediate electron acceptor for the enzyme in this species is believed to be ubiquinone. Couples the redox reaction to proton translocation (for every two electrons transferred, four hydrogen ions are translocated across the cytoplasmic membrane), and thus conserves the redox energy in a proton gradient. In Roseiflexus castenholzii (strain DSM 13941 / HLO8), this protein is NADH-quinone oxidoreductase subunit B 1.